Consider the following 331-residue polypeptide: MRPISLRLHERPITQVLFNREGDLLFVAAKDKLVSLWYTTNGERIGSYQCGGVVYSIDVSQDSKYLITASADAKARVWDVSSGRQLDSTDFEVSARSIEFSQGDKQILVVTDQVMGCQAKIHVFDFDKDEVRKLNKSYTLPSPQCKITQATWGPLNKTIFASCEDGAVRIYCTEKRELIKTILDHNKLVTRIEWTKHRIMFMTCSKDGTAKLYDTKTLKLLRTFDTGRPINAAGISPLKPHVILGGGQSAESVTTTKVDASQFKVRFFHIVYGEELGGLIGHIGPVHSICFTPDGKTFATGGEEGLVQVNHLDESYFEFDDDLVYNPPVQH.

WD repeat units lie at residues 8-47 (LHERPITQVLFNREGDLLFVAAKDKLVSLWYTTNGERIGS), 49-88 (QCGGVVYSIDVSQDSKYLITASADAKARVWDVSSGRQLDS), 142-181 (SPQCKITQATWGPLNKTIFASCEDGAVRIYCTEKRELIKT), 184-223 (DHNKLVTRIEWTKHRIMFMTCSKDGTAKLYDTKTLKLLRT), and 281-320 (GHIGPVHSICFTPDGKTFATGGEEGLVQVNHLDESYFEFD).

It belongs to the eIF-3 subunit I family. Component of the eukaryotic translation initiation factor 3 (eIF-3) complex.

The protein resides in the cytoplasm. In terms of biological role, component of the eukaryotic translation initiation factor 3 (eIF-3) complex, which is involved in protein synthesis of a specialized repertoire of mRNAs and, together with other initiation factors, stimulates binding of mRNA and methionyl-tRNAi to the 40S ribosome. The eIF-3 complex specifically targets and initiates translation of a subset of mRNAs involved in cell proliferation. This chain is Eukaryotic translation initiation factor 3 subunit I (eif3I), found in Dictyostelium discoideum (Social amoeba).